The primary structure comprises 63 residues: Sarcotoxin-1A (63 aa).

A signal peptide spans 1 to 23 (MNFQNIFIFVALILAVFAGQSQA). Arg62 is subject to Arginine amide.

This sequence belongs to the cecropin family.

It is found in the secreted. Functionally, sarcotoxins, which are potent bactericidal proteins, are produced in response to injury. They are cytotoxic to both Gram-positive and Gram-negative bacteria. In Sarcophaga peregrina (Flesh fly), this protein is Sarcotoxin-1A.